The primary structure comprises 149 residues: Large ribosomal subunit protein bL9 (149 aa).

The protein belongs to the bacterial ribosomal protein bL9 family.

In terms of biological role, binds to the 23S rRNA. The polypeptide is Large ribosomal subunit protein bL9 (Salinibacter ruber (strain DSM 13855 / M31)).